A 199-amino-acid polypeptide reads, in one-letter code: dTTP/UTP pyrophosphatase (199 aa).

D76 serves as the catalytic Proton acceptor.

The protein belongs to the Maf family. YhdE subfamily. Requires a divalent metal cation as cofactor.

The protein localises to the cytoplasm. The catalysed reaction is dTTP + H2O = dTMP + diphosphate + H(+). It carries out the reaction UTP + H2O = UMP + diphosphate + H(+). In terms of biological role, nucleoside triphosphate pyrophosphatase that hydrolyzes dTTP and UTP. May have a dual role in cell division arrest and in preventing the incorporation of modified nucleotides into cellular nucleic acids. The sequence is that of dTTP/UTP pyrophosphatase from Chlorobaculum parvum (strain DSM 263 / NCIMB 8327) (Chlorobium vibrioforme subsp. thiosulfatophilum).